We begin with the raw amino-acid sequence, 516 residues long: L-amino-acid oxidase (516 aa).

Positions methionine 1–cysteine 18 are cleaved as a signal peptide. A disulfide bridge connects residues cysteine 28 and cysteine 189. Residues methionine 61–alanine 62, glutamate 81–alanine 82, arginine 89, and glycine 103–arginine 106 contribute to the FAD site. Substrate-binding residues include arginine 106 and histidine 239. Valine 279 serves as a coordination point for FAD. A disulfide bridge connects residues cysteine 349 and cysteine 430. A glycan (N-linked (GlcNAc...) asparagine) is linked at asparagine 379. Tyrosine 390 provides a ligand contact to substrate. Residues glutamate 475 and glycine 482–threonine 487 each bind FAD. Residue glycine 482 to tryptophan 483 coordinates substrate.

This sequence belongs to the flavin monoamine oxidase family. FIG1 subfamily. As to quaternary structure, homodimer; non-covalently linked. It depends on FAD as a cofactor. N-glycosylated. In terms of tissue distribution, expressed by the venom gland.

It localises to the secreted. The enzyme catalyses an L-alpha-amino acid + O2 + H2O = a 2-oxocarboxylate + H2O2 + NH4(+). It carries out the reaction L-leucine + O2 + H2O = 4-methyl-2-oxopentanoate + H2O2 + NH4(+). It catalyses the reaction L-phenylalanine + O2 + H2O = 3-phenylpyruvate + H2O2 + NH4(+). The catalysed reaction is L-methionine + O2 + H2O = 4-methylsulfanyl-2-oxobutanoate + H2O2 + NH4(+). The enzyme catalyses L-arginine + O2 + H2O = 5-guanidino-2-oxopentanoate + H2O2 + NH4(+). In terms of biological role, catalyzes an oxidative deamination of predominantly hydrophobic and aromatic L-amino acids, thus producing hydrogen peroxide that may contribute to the diverse toxic effects of this enzyme. Is active on L-Arg, L-Phe, L-Met, and L-Leu and is weakly active on L-Val. Exhibits diverse biological activities, such as hemorrhage, hemolysis, edema, apoptosis of vascular endothelial cells or tumor cell lines, antibacterial and antiparasitic activities, as well as regulation of platelet aggregation. Its effect on platelets is controversial, since it either induces aggregation or inhibits agonist-induced aggregation. These different effects are probably due to different experimental conditions. The protein is L-amino-acid oxidase of Crotalus adamanteus (Eastern diamondback rattlesnake).